The sequence spans 562 residues: Phosphoglucomutase-1 (562 aa).

Residue Met1 is modified to N-acetylmethionine. At Lys16 the chain carries N6-acetyllysine. Arg23 lines the alpha-D-glucose 1,6-bisphosphate pocket. Thr115 is modified (phosphothreonine). Residue Ser117 coordinates alpha-D-glucose 1,6-bisphosphate. The active-site Phosphoserine intermediate is Ser117. Residue Ser117 participates in Mg(2+) binding. Residues Ser117 and Ser134 each carry the phosphoserine modification. Thr185 carries the phosphothreonine modification. Residues Ser201, Ser206, and Ser213 each carry the phosphoserine modification. Mg(2+)-binding residues include Asp288, Asp290, and Asp292. Asp292 and Arg293 together coordinate alpha-D-glucose 1,6-bisphosphate. Residue Lys349 is modified to N6-acetyllysine. Phosphotyrosine is present on Tyr353. Residue Thr357 coordinates alpha-D-glucose 1,6-bisphosphate. Ser369 is subject to Phosphoserine. Positions 376, 378, and 389 each coordinate alpha-D-glucose 1,6-bisphosphate. Ser378 carries the phosphoserine modification. Lys419 is subject to N6-succinyllysine. A Phosphothreonine; by PAK1 modification is found at Thr467. 3 positions are modified to phosphoserine: Ser477, Ser485, and Ser505. Residue Thr507 is modified to Phosphothreonine. Phosphoserine is present on residues Ser509 and Ser541.

It belongs to the phosphohexose mutase family. In terms of assembly, monomer. The cofactor is Mg(2+). Post-translationally, phosphorylation at Thr-467 by PAK1 significantly enhances enzymatic activity.

The protein resides in the cytoplasm. It carries out the reaction alpha-D-glucose 1-phosphate = alpha-D-glucose 6-phosphate. It catalyses the reaction O-phospho-L-seryl-[protein] + alpha-D-glucose 1-phosphate = alpha-D-glucose 1,6-bisphosphate + L-seryl-[protein]. The enzyme catalyses alpha-D-glucose 1,6-bisphosphate + L-seryl-[protein] = O-phospho-L-seryl-[protein] + alpha-D-glucose 6-phosphate. Its activity is regulated as follows. Glucose-1,6-bisphosphate enhances phosphorylation of the active site Ser-117, and thereby increases enzyme activity. Catalyzes the reversible isomerization of alpha-D-glucose 1-phosphate to alpha-D-glucose 6-phosphate. The mechanism proceeds via the intermediate compound alpha-D-glucose 1,6-bisphosphate. This enzyme participates in both the breakdown and synthesis of glucose. The protein is Phosphoglucomutase-1 (PGM1) of Homo sapiens (Human).